A 125-amino-acid chain; its full sequence is Large ribosomal subunit protein bL12 (125 aa).

This sequence belongs to the bacterial ribosomal protein bL12 family. Homodimer. Part of the ribosomal stalk of the 50S ribosomal subunit. Forms a multimeric L10(L12)X complex, where L10 forms an elongated spine to which 2 to 4 L12 dimers bind in a sequential fashion. Binds GTP-bound translation factors.

In terms of biological role, forms part of the ribosomal stalk which helps the ribosome interact with GTP-bound translation factors. Is thus essential for accurate translation. The sequence is that of Large ribosomal subunit protein bL12 from Campylobacter jejuni (strain RM1221).